Consider the following 94-residue polypeptide: MANHASADKRNRQRITRTARNRAIKSELRTTVKKARTALKGVPQESAAPVTAAVSALDRAASKGTIPAKRASRVKSRLALALHKASVAAKTAAS.

Residues 1–10 (MANHASADKR) show a composition bias toward basic and acidic residues. Residues 1–20 (MANHASADKRNRQRITRTAR) form a disordered region. Basic residues predominate over residues 11–20 (NRQRITRTAR).

It belongs to the bacterial ribosomal protein bS20 family.

Binds directly to 16S ribosomal RNA. The polypeptide is Small ribosomal subunit protein bS20 (Sorangium cellulosum (strain So ce56) (Polyangium cellulosum (strain So ce56))).